A 198-amino-acid chain; its full sequence is Probable GTP-binding protein EngB (198 aa).

The 174-residue stretch at 22 to 195 (DLPEIALAGR…WKAIHKFTKT (174 aa)) folds into the EngB-type G domain. GTP is bound by residues 30–37 (GRSNVGKS), 57–61 (GKTQT), 75–78 (DVPG), 142–145 (TKAD), and 174–176 (FSS). Residues Ser37 and Thr59 each coordinate Mg(2+).

Belongs to the TRAFAC class TrmE-Era-EngA-EngB-Septin-like GTPase superfamily. EngB GTPase family. Mg(2+) is required as a cofactor.

In terms of biological role, necessary for normal cell division and for the maintenance of normal septation. This Bacillus anthracis (strain A0248) protein is Probable GTP-binding protein EngB.